Consider the following 272-residue polypeptide: 4-diphosphocytidyl-2-C-methyl-D-erythritol kinase (272 aa).

The active site involves K14. ATP is bound at residue 92–102; the sequence is PMGGGLGGGSS. D132 is a catalytic residue.

Belongs to the GHMP kinase family. IspE subfamily.

The enzyme catalyses 4-CDP-2-C-methyl-D-erythritol + ATP = 4-CDP-2-C-methyl-D-erythritol 2-phosphate + ADP + H(+). The protein operates within isoprenoid biosynthesis; isopentenyl diphosphate biosynthesis via DXP pathway; isopentenyl diphosphate from 1-deoxy-D-xylulose 5-phosphate: step 3/6. In terms of biological role, catalyzes the phosphorylation of the position 2 hydroxy group of 4-diphosphocytidyl-2C-methyl-D-erythritol. This chain is 4-diphosphocytidyl-2-C-methyl-D-erythritol kinase, found in Fervidobacterium nodosum (strain ATCC 35602 / DSM 5306 / Rt17-B1).